A 480-amino-acid polypeptide reads, in one-letter code: F-box only protein 3 (480 aa).

The F-box domain maps to 10–56 (LLTLESLPTDPLLLILSFVDYRDLINCCYVSRRLSQLSTHDPLWRRH). An ApaG domain is found at 278–408 (VATTGDITVS…FHMACPTFRV (131 aa)). Residues 419–458 (EYEEMEEEAEEEEEEENDDSADMDESDESDADENESDEGE) are compositionally biased toward acidic residues. The tract at residues 419-463 (EYEEMEEEAEEEEEEENDDSADMDESDESDADENESDEGEGEARR) is disordered.

In terms of assembly, part of a SCF (SKP1-cullin-F-box) protein ligase complex SCF(FBXO3) consisting of FBXO3, SKP1, CUL1 and RBX1. Interacts with PML, interaction is direct and takes place either alone or within the SCF complex.

It is found in the nucleus. The protein operates within protein modification; protein ubiquitination. Substrate recognition component of the SCF (SKP1-CUL1-F-box protein)-type E3 ubiquitin ligase complex, SCF(FBXO3), which mediates the ubiquitination and subsequent proteasomal degradation of target proteins. Mediates the ubiquitination of HIPK2 and probably that of EP300, leading to rapid degradation by the proteasome. In the presence of PML, HIPK2 ubiquitination still occurs, but degradation is prevented. PML, HIPK2 and FBXO3 may act synergically to activate p53/TP53-dependent transactivation. The SCF(FBXO3) also acts as a regulator of inflammation by mediating ubiquitination and degradation of FBXL2: specifically recognizes FBXL2 phosphorylated at 'Thr-404' and promotes its ubiquitination. This Mus musculus (Mouse) protein is F-box only protein 3 (Fbxo3).